A 385-amino-acid chain; its full sequence is 8-amino-7-oxononanoate synthase (385 aa).

R21 contributes to the substrate binding site. 108–109 (GF) contacts pyridoxal 5'-phosphate. H133 contributes to the substrate binding site. The pyridoxal 5'-phosphate site is built by S179, H207, and T233. K236 carries the post-translational modification N6-(pyridoxal phosphate)lysine. T352 lines the substrate pocket.

Belongs to the class-II pyridoxal-phosphate-dependent aminotransferase family. BioF subfamily. In terms of assembly, homodimer. Pyridoxal 5'-phosphate is required as a cofactor.

It catalyses the reaction 6-carboxyhexanoyl-[ACP] + L-alanine + H(+) = (8S)-8-amino-7-oxononanoate + holo-[ACP] + CO2. It functions in the pathway cofactor biosynthesis; biotin biosynthesis. In terms of biological role, catalyzes the decarboxylative condensation of pimeloyl-[acyl-carrier protein] and L-alanine to produce 8-amino-7-oxononanoate (AON), [acyl-carrier protein], and carbon dioxide. This Salmonella paratyphi B (strain ATCC BAA-1250 / SPB7) protein is 8-amino-7-oxononanoate synthase.